A 360-amino-acid chain; its full sequence is Phospho-N-acetylmuramoyl-pentapeptide-transferase (360 aa).

Transmembrane regions (helical) follow at residues 21–41 (YITFRAIMALLTAMGIGLWIG), 73–93 (TMGGIMILIAIGVSTLLWADL), 98–118 (IWFVLFVLFGYGAVGFVDDYW), 132–152 (WKYFWLSVIALIAVFGIYAVG), 168–188 (VMPQLGIFFIILSYFVIVGTS), 199–219 (GLAIVPTIMVASAFALIAWAT), 236–256 (AGELVILCTAIVGAGLGFLWY), 263–283 (VFMGDVGSLSLGGALGTIAVL), 288–308 (LLLVIMGGVFVVEALSVILQV), and 338–358 (VIVRFWIITLMLVLIGLVTLK).

The protein belongs to the glycosyltransferase 4 family. MraY subfamily. It depends on Mg(2+) as a cofactor.

It localises to the cell inner membrane. It carries out the reaction UDP-N-acetyl-alpha-D-muramoyl-L-alanyl-gamma-D-glutamyl-meso-2,6-diaminopimeloyl-D-alanyl-D-alanine + di-trans,octa-cis-undecaprenyl phosphate = di-trans,octa-cis-undecaprenyl diphospho-N-acetyl-alpha-D-muramoyl-L-alanyl-D-glutamyl-meso-2,6-diaminopimeloyl-D-alanyl-D-alanine + UMP. Its pathway is cell wall biogenesis; peptidoglycan biosynthesis. Catalyzes the initial step of the lipid cycle reactions in the biosynthesis of the cell wall peptidoglycan: transfers peptidoglycan precursor phospho-MurNAc-pentapeptide from UDP-MurNAc-pentapeptide onto the lipid carrier undecaprenyl phosphate, yielding undecaprenyl-pyrophosphoryl-MurNAc-pentapeptide, known as lipid I. In Actinobacillus pleuropneumoniae serotype 5b (strain L20), this protein is Phospho-N-acetylmuramoyl-pentapeptide-transferase.